Here is a 327-residue protein sequence, read N- to C-terminus: ATP-dependent 6-phosphofructokinase (327 aa).

Gly12 serves as a coordination point for ATP. Residues 22 to 26 (RGVVR) and 55 to 60 (RYSVSD) each bind ADP. Residues 73–74 (RF) and 103–106 (GDGS) contribute to the ATP site. A Mg(2+)-binding site is contributed by Asp104. Substrate is bound at residue 127–129 (TID). Asp129 (proton acceptor) is an active-site residue. Arg156 is a binding site for ADP. Substrate-binding positions include Arg164 and 171–173 (MGR). ADP contacts are provided by residues 187–189 (GCE), Lys213, and 215–217 (KKH). Substrate is bound by residues Glu224, Arg245, and 251-254 (HIQR).

This sequence belongs to the phosphofructokinase type A (PFKA) family. ATP-dependent PFK group I subfamily. Prokaryotic clade 'B1' sub-subfamily. Homotetramer. Requires Mg(2+) as cofactor.

It localises to the cytoplasm. It catalyses the reaction beta-D-fructose 6-phosphate + ATP = beta-D-fructose 1,6-bisphosphate + ADP + H(+). The protein operates within carbohydrate degradation; glycolysis; D-glyceraldehyde 3-phosphate and glycerone phosphate from D-glucose: step 3/4. With respect to regulation, allosterically activated by ADP and other diphosphonucleosides, and allosterically inhibited by phosphoenolpyruvate. Catalyzes the phosphorylation of D-fructose 6-phosphate to fructose 1,6-bisphosphate by ATP, the first committing step of glycolysis. This chain is ATP-dependent 6-phosphofructokinase, found in Yersinia pseudotuberculosis serotype IB (strain PB1/+).